The sequence spans 464 residues: NAD(P) transhydrogenase subunit beta (464 aa).

Helical transmembrane passes span 54-74, 86-106, 126-146, 164-184, 191-211, and 227-247; these read VQAY…GTVI, LVAA…TGAL, VEMS…VIAF, HPLN…FAAT, FALM…IGGA, and AAAG…GALV. NADP(+) is bound by residues 316–317, 348–353, 390–394, 425–432, and 451–452; these read YG, VAGRMP, GANDV, KRSMASGY, and DA.

It belongs to the PNT beta subunit family. Complex of an alpha and a beta chain; in Rhodospirillum, the alpha chain seems to be made of two subunits.

The protein resides in the cell inner membrane. It catalyses the reaction NAD(+) + NADPH + H(+)(in) = NADH + NADP(+) + H(+)(out). The transhydrogenation between NADH and NADP is coupled to respiration and ATP hydrolysis and functions as a proton pump across the membrane. The sequence is that of NAD(P) transhydrogenase subunit beta (pntB) from Rhodospirillum rubrum (strain ATCC 11170 / ATH 1.1.1 / DSM 467 / LMG 4362 / NCIMB 8255 / S1).